The sequence spans 291 residues: Methylsterol monooxygenase 1-3 (291 aa).

Helical transmembrane passes span 41 to 61 (TILV…IVEW), 92 to 112 (FLLV…MVGI), and 114 to 134 (SGLP…YFLI). The Fatty acid hydroxylase domain maps to 128 to 263 (LVVYFLIEDY…FTYCDYIYGT (136 aa)). The Histidine box-1 motif lies at 143-147 (HRWMH). The Histidine box-2 signature appears at 156-160 (HRIHH). A helical transmembrane segment spans residues 178–198 (ILILGIPTFLGPAIAPGHIMT). Positions 235–241 (YHDYHHY) match the Histidine box-3 motif.

The protein belongs to the sterol desaturase family. As to quaternary structure, interacts with ACBP1. Fe cation serves as cofactor. In terms of tissue distribution, expressed at low levels in leaves, roots, siliques and flowers.

The protein resides in the endoplasmic reticulum membrane. The enzyme catalyses 4,4-dimethyl-5alpha-cholest-7-en-3beta-ol + 6 Fe(II)-[cytochrome b5] + 3 O2 + 5 H(+) = 4alpha-carboxy-4beta-methyl-5alpha-cholest-7-ene-3beta-ol + 6 Fe(III)-[cytochrome b5] + 4 H2O. It carries out the reaction 24-methylidenelophenol + 6 Fe(II)-[cytochrome b5] + 3 O2 + 5 H(+) = 4alpha-carboxy-ergosta-7,24(24(1))-dien-3beta-ol + 6 Fe(III)-[cytochrome b5] + 4 H2O. In terms of biological role, non-heme iron oxygenase involved in sterols biosynthesis by catalyzing the removal of the first methyl group at the C-4 position. 4,4-dimethyl-9-beta,19-cyclopropylsterols such as 24-methylenecycloartanol are the preferred substrates. The polypeptide is Methylsterol monooxygenase 1-3 (Arabidopsis thaliana (Mouse-ear cress)).